Consider the following 338-residue polypeptide: Eukaryotic translation initiation factor 3 subunit H (338 aa).

In terms of domain architecture, MPN spans 22-154 (VQCDGLAVMK…LKAYRLTPQA (133 aa)).

The protein belongs to the eIF-3 subunit H family. Component of the eukaryotic translation initiation factor 3 (eIF-3) complex. The eIF-3 complex interacts with pix. Interacts with mxt.

The protein localises to the cytoplasm. Its function is as follows. Component of the eukaryotic translation initiation factor 3 (eIF-3) complex, which is involved in protein synthesis of a specialized repertoire of mRNAs and, together with other initiation factors, stimulates binding of mRNA and methionyl-tRNAi to the 40S ribosome. The eIF-3 complex specifically targets and initiates translation of a subset of mRNAs involved in cell proliferation. This is Eukaryotic translation initiation factor 3 subunit H from Drosophila melanogaster (Fruit fly).